The sequence spans 132 residues: Small ribosomal subunit protein uS9 (132 aa).

The protein belongs to the universal ribosomal protein uS9 family.

The polypeptide is Small ribosomal subunit protein uS9 (rpsI) (Mycoplasma pneumoniae (strain ATCC 29342 / M129 / Subtype 1) (Mycoplasmoides pneumoniae)).